We begin with the raw amino-acid sequence, 410 residues long: WD repeat-containing protein jip5 (410 aa).

6 WD repeats span residues 9 to 48 (PLSA…EEEH), 74 to 113 (RHKG…VENK), 119 to 160 (AKDG…SKVA), 223 to 264 (VSST…DQDE), 273 to 316 (GGGE…VVSE), and 320 to 357 (DETE…IGGE). A disordered region spans residues 41–65 (PTEEEEEHSDDEQASVSSSRNGKGH). Acidic residues predominate over residues 43-53 (EEEEEHSDDEQ). The disordered stretch occupies residues 354–410 (IGGEKRGFGGDSDDSDDDSDDSDHEPKQGDDSRRKRKKQKGKDRGKGPEIMAFADLD). The span at 364–376 (DSDDSDDDSDDSD) shows a compositional bias: acidic residues. The span at 377-386 (HEPKQGDDSR) shows a compositional bias: basic and acidic residues.

This sequence belongs to the WD repeat WDR55 family.

The protein resides in the nucleus. It localises to the nucleolus. The chain is WD repeat-containing protein jip5 (jip5) from Emericella nidulans (strain FGSC A4 / ATCC 38163 / CBS 112.46 / NRRL 194 / M139) (Aspergillus nidulans).